We begin with the raw amino-acid sequence, 364 residues long: Putative galactoside 2-alpha-L-fucosyltransferase svh-11 (364 aa).

Topologically, residues 1-19 are cytoplasmic; the sequence is MRLFHFLKFLTINNFSRYC. Residues 20–42 traverse the membrane as a helical; Signal-anchor for type II membrane protein segment; the sequence is LKIVKVHIIWITIICIIYFNWRF. At 43 to 364 the chain is on the lumenal side; that stretch reads KKLDFMAIPY…SANSFTVVRS (322 aa). 2 N-linked (GlcNAc...) asparagine glycosylation sites follow: N60 and N128.

This sequence belongs to the glycosyltransferase 11 family.

The protein resides in the golgi apparatus. It localises to the golgi stack membrane. Mediates the transfer of fucose to the terminal galactose on glycan chains of cell surface glycoproteins and glycolipids. Required for axon regeneration after injury. The protein is Putative galactoside 2-alpha-L-fucosyltransferase svh-11 of Caenorhabditis elegans.